A 424-amino-acid chain; its full sequence is D-inositol 3-phosphate glycosyltransferase (424 aa).

1D-myo-inositol 3-phosphate-binding positions include His9, 20-25, Lys78, Tyr110, Thr134, and Arg154; that span reads DAGGMN. UDP-N-acetyl-alpha-D-glucosamine is bound at residue Gly23. Arg231, Lys236, and Arg295 together coordinate UDP-N-acetyl-alpha-D-glucosamine. The Mg(2+) site is built by Tyr304, Gln305, and Ala307. UDP-N-acetyl-alpha-D-glucosamine-binding residues include Glu317 and Glu325. A Mg(2+)-binding site is contributed by Thr331.

This sequence belongs to the glycosyltransferase group 1 family. MshA subfamily. Homodimer.

It carries out the reaction 1D-myo-inositol 3-phosphate + UDP-N-acetyl-alpha-D-glucosamine = 1D-myo-inositol 2-acetamido-2-deoxy-alpha-D-glucopyranoside 3-phosphate + UDP + H(+). In terms of biological role, catalyzes the transfer of a N-acetyl-glucosamine moiety to 1D-myo-inositol 3-phosphate to produce 1D-myo-inositol 2-acetamido-2-deoxy-glucopyranoside 3-phosphate in the mycothiol biosynthesis pathway. The polypeptide is D-inositol 3-phosphate glycosyltransferase (Corynebacterium urealyticum (strain ATCC 43042 / DSM 7109)).